The primary structure comprises 838 residues: Probable inorganic carbon transporter subunit DabA (838 aa).

The Zn(2+) site is built by C353, D355, H537, and C552.

The protein belongs to the inorganic carbon transporter (TC 9.A.2) DabA family. Forms a complex with DabB. The cofactor is Zn(2+).

It localises to the cell membrane. Its function is as follows. Part of an energy-coupled inorganic carbon pump. The sequence is that of Probable inorganic carbon transporter subunit DabA from Roseiflexus sp. (strain RS-1).